Here is a 160-residue protein sequence, read N- to C-terminus: NADH-quinone oxidoreductase subunit I (160 aa).

4Fe-4S ferredoxin-type domains lie at 52–81 and 91–120; these read RRYS…IEAE and TRYD…EGPN. Positions 61, 64, 67, 71, 100, 103, 106, and 110 each coordinate [4Fe-4S] cluster.

Belongs to the complex I 23 kDa subunit family. As to quaternary structure, NDH-1 is composed of 14 different subunits. Subunits NuoA, H, J, K, L, M, N constitute the membrane sector of the complex. The cofactor is [4Fe-4S] cluster.

Its subcellular location is the cell membrane. The catalysed reaction is a quinone + NADH + 5 H(+)(in) = a quinol + NAD(+) + 4 H(+)(out). NDH-1 shuttles electrons from NADH, via FMN and iron-sulfur (Fe-S) centers, to quinones in the respiratory chain. The immediate electron acceptor for the enzyme in this species is believed to be ubiquinone. Couples the redox reaction to proton translocation (for every two electrons transferred, four hydrogen ions are translocated across the cytoplasmic membrane), and thus conserves the redox energy in a proton gradient. The protein is NADH-quinone oxidoreductase subunit I of Wolbachia sp. subsp. Brugia malayi (strain TRS).